The primary structure comprises 392 residues: Heat-inducible transcription repressor HrcA (392 aa).

The protein belongs to the HrcA family.

Negative regulator of class I heat shock genes (grpE-dnaK-dnaJ and groELS operons). Prevents heat-shock induction of these operons. The chain is Heat-inducible transcription repressor HrcA from Synechococcus sp. (strain JA-3-3Ab) (Cyanobacteria bacterium Yellowstone A-Prime).